Here is a 295-residue protein sequence, read N- to C-terminus: F-box protein SKIP24 (295 aa).

An F-box; degenerate domain is found at 19–66 (VKSSTFSYKDLCCISISSRRLFRLSCDDSLWDLLLVHDFPNHIVSASS). Coiled coils occupy residues 82-129 (REKE…SSLQ) and 167-209 (EGRL…ESMK). The interval 217-245 (KSIRNGDQGSNGKTKKLKTSINYSGDQVS) is disordered. A compositionally biased stretch (polar residues) spans 235-245 (TSINYSGDQVS).

As to quaternary structure, part of a SCF (ASK-cullin-F-box) protein ligase complex. Interacts with SKP1A/ASK1 and SPK1B/ASK2.

The protein operates within protein modification; protein ubiquitination. Functionally, component of SCF(ASK-cullin-F-box) E3 ubiquitin ligase complexes, which may mediate the ubiquitination and subsequent proteasomal degradation of target proteins. This chain is F-box protein SKIP24 (SKIP24), found in Arabidopsis thaliana (Mouse-ear cress).